We begin with the raw amino-acid sequence, 294 residues long: Acetylglutamate kinase (294 aa).

Substrate contacts are provided by residues glycine 69–glycine 70, arginine 91, and asparagine 190.

It belongs to the acetylglutamate kinase family. ArgB subfamily.

It localises to the cytoplasm. The enzyme catalyses N-acetyl-L-glutamate + ATP = N-acetyl-L-glutamyl 5-phosphate + ADP. It participates in amino-acid biosynthesis; L-arginine biosynthesis; N(2)-acetyl-L-ornithine from L-glutamate: step 2/4. Its function is as follows. Catalyzes the ATP-dependent phosphorylation of N-acetyl-L-glutamate. This Mycobacterium tuberculosis (strain CDC 1551 / Oshkosh) protein is Acetylglutamate kinase.